A 96-amino-acid chain; its full sequence is Aspartyl/glutamyl-tRNA(Asn/Gln) amidotransferase subunit C (96 aa).

Belongs to the GatC family. Heterotrimer of A, B and C subunits.

The enzyme catalyses L-glutamyl-tRNA(Gln) + L-glutamine + ATP + H2O = L-glutaminyl-tRNA(Gln) + L-glutamate + ADP + phosphate + H(+). The catalysed reaction is L-aspartyl-tRNA(Asn) + L-glutamine + ATP + H2O = L-asparaginyl-tRNA(Asn) + L-glutamate + ADP + phosphate + 2 H(+). Functionally, allows the formation of correctly charged Asn-tRNA(Asn) or Gln-tRNA(Gln) through the transamidation of misacylated Asp-tRNA(Asn) or Glu-tRNA(Gln) in organisms which lack either or both of asparaginyl-tRNA or glutaminyl-tRNA synthetases. The reaction takes place in the presence of glutamine and ATP through an activated phospho-Asp-tRNA(Asn) or phospho-Glu-tRNA(Gln). The protein is Aspartyl/glutamyl-tRNA(Asn/Gln) amidotransferase subunit C of Exiguobacterium sp. (strain ATCC BAA-1283 / AT1b).